Here is a 361-residue protein sequence, read N- to C-terminus: Protein-glutamate methylesterase/protein-glutamine glutaminase 1 (361 aa).

Residues 10-127 (KVLVVDDSAL…REGIEEKAQE (118 aa)) enclose the Response regulatory domain. The residue at position 61 (D61) is a 4-aspartylphosphate. Residues 167 to 359 (FATTDKLIAV…ASVKRWYAEN (193 aa)) form the CheB-type methylesterase domain. Active-site residues include S179, H205, and D301.

It belongs to the CheB family. In terms of processing, phosphorylated by CheA. Phosphorylation of the N-terminal regulatory domain activates the methylesterase activity.

It localises to the cytoplasm. The enzyme catalyses [protein]-L-glutamate 5-O-methyl ester + H2O = L-glutamyl-[protein] + methanol + H(+). The catalysed reaction is L-glutaminyl-[protein] + H2O = L-glutamyl-[protein] + NH4(+). In terms of biological role, involved in chemotaxis. Part of a chemotaxis signal transduction system that modulates chemotaxis in response to various stimuli. Catalyzes the demethylation of specific methylglutamate residues introduced into the chemoreceptors (methyl-accepting chemotaxis proteins or MCP) by CheR. Also mediates the irreversible deamidation of specific glutamine residues to glutamic acid. In Hahella chejuensis (strain KCTC 2396), this protein is Protein-glutamate methylesterase/protein-glutamine glutaminase 1.